We begin with the raw amino-acid sequence, 329 residues long: Delta(7)-sterol 5(6)-desaturase erg32 (329 aa).

Helical transmembrane passes span leucine 67–tyrosine 87 and phenylalanine 149–isoleucine 169. The 126-residue stretch at alanine 156–serine 281 folds into the Fatty acid hydroxylase domain. A Histidine box-1 motif is present at residues histidine 170–histidine 175. Residues histidine 183 to histidine 187 carry the Histidine box-2 motif. A helical transmembrane segment spans residues leucine 210–phenylalanine 230. The Histidine box-3 signature appears at histidine 257–histidine 262.

The protein belongs to the sterol desaturase family. The cofactor is Fe cation.

It is found in the endoplasmic reticulum membrane. It localises to the golgi apparatus membrane. It carries out the reaction episterol + 2 Fe(II)-[cytochrome b5] + O2 + 2 H(+) = 5-dehydroepisterol + 2 Fe(III)-[cytochrome b5] + 2 H2O. It functions in the pathway steroid metabolism; ergosterol biosynthesis. Functionally, C-5 sterol desaturase; part of the third module of ergosterol biosynthesis pathway that includes by the late steps of the pathway. Erg31 and erg32 catalyze the introduction of a C-5 double bond in the B ring to produce 5-dehydroepisterol. The third module or late pathway involves the ergosterol synthesis itself through consecutive reactions that mainly occur in the endoplasmic reticulum (ER) membrane. Firstly, the squalene synthase erg9 catalyzes the condensation of 2 farnesyl pyrophosphate moieties to form squalene, which is the precursor of all steroids. Secondly, squalene is converted into lanosterol by the consecutive action of the squalene epoxidase erg1 and the lanosterol synthase erg7. The lanosterol 14-alpha-demethylase erg11/cyp1 catalyzes C14-demethylation of lanosterol to produce 4,4'-dimethyl cholesta-8,14,24-triene-3-beta-ol. In the next steps, a complex process involving various demethylation, reduction and desaturation reactions catalyzed by the C-14 reductase erg24 and the C-4 demethylation complex erg25-erg26-erg27 leads to the production of zymosterol. Erg28 likely functions in the C-4 demethylation complex reaction by tethering erg26 and Erg27 to the endoplasmic reticulum or to facilitate interaction between these proteins. Then, the sterol 24-C-methyltransferase erg6 catalyzes the methyl transfer from S-adenosyl-methionine to the C-24 of zymosterol to form fecosterol. The C-8 sterol isomerase erg2 catalyzes the reaction which results in unsaturation at C-7 in the B ring of sterols and thus converts fecosterol to episterol. The sterol-C5-desaturases erg31 and erg32 then catalyze the introduction of a C-5 double bond in the B ring to produce 5-dehydroepisterol. The C-22 sterol desaturase erg5 further converts 5-dehydroepisterol into ergosta-5,7,22,24(28)-tetraen-3beta-ol by forming the C-22(23) double bond in the sterol side chain. Finally, ergosta-5,7,22,24(28)-tetraen-3beta-ol is substrate of the C-24(28) sterol reductase erg4 to produce ergosterol. In the genus Schizosaccharomyces, a second route exists between lanosterol and fecosterol, via the methylation of lanosterol to eburicol by erg6, followed by C14-demethylation by erg11/cyp1 and C4-demethylation by the demethylation complex erg25-erg26-erg27. The sequence is that of Delta(7)-sterol 5(6)-desaturase erg32 from Schizosaccharomyces pombe (strain 972 / ATCC 24843) (Fission yeast).